The primary structure comprises 267 residues: Pre-protein VI (267 aa).

A propeptide spanning residues 1–33 is cleaved from the precursor; the sequence is MEDINFASLAPRHGSRPFMGTWNEIGTSQLNGG. Residues 34–54 are amphipathic alpha-helix essential for membrane lytic activity; sequence AFSWSSLWSGIKNFGSSIKSF. Residues 36-53 form an involved in endosomal membrane lysis region; it reads SWSSLWSGIKNFGSSIKS. Residues 48–74 are interaction with hexon protein; sequence GSSIKSFGNKAWNSNTGQMLRDKLKDQ. Residues 67-76 carry the Nuclear export signal motif; it reads LRDKLKDQNF. 2 disordered regions span residues 107 to 184 and 199 to 230; these read LENS…PMTK and KPVT…PTAP. 2 stretches are compositionally biased toward basic and acidic residues: residues 123-135 and 146-155; these read PKVE…EKLP and KGEKRPRPDL. Positions 149–153 match the Nuclear localization signal motif; that stretch reads KRPRP. The short motif at 166-169 is the PPXY motif element; that stretch reads PPSY. The span at 205–217 shows a compositional bias: pro residues; the sequence is LPPPVPTVPPMPA. A compositionally biased stretch (low complexity) spans 218-230; it reads PTLGTAVSRPTAP. The short motif at 248-259 is the Nuclear export signal element; it reads STLNSIVGLGVK. Residues 250 to 256 are interaction with hexon protein; it reads LNSIVGL. The tract at residues 257–267 is binds to importin alpha/beta, involved in hexon nuclear import; sequence GVKSLKRRRCY. The Nuclear localization signal motif lies at 262–265; the sequence is KRRR.

It belongs to the adenoviridae protein VI family. In terms of assembly, interacts with hexon protein; this interaction allows nuclear import of hexon trimers and possibly pre-capsid assembly. Interacts (via C-terminal NLS) with importin alpha/beta. As to quaternary structure, interacts (via PPxY motif) with host NEDD4 ubiquitine ligase; this interaction might play a role in virus intracellular transport during entry. Part of a complex composed of the core-capsid bridging protein, the endosome lysis protein VI and the hexon-linking protein VIII; these interactions bridge the virus core to the capsid. Interacts with peripentonal hexons; this interaction stabilizes the capsid by gluing two peripentonal hexons together and joining them with an adjacent group-of-nine hexon. Heterodimer with the viral protease; disulfide-linked. Interacts with the viral protease. Ubiquitinated by Nedd4 following partial capsid disassembly; which might play a role in intracellular virus movement during entry. In terms of processing, contains the major nuclear import and export signals. Proteolytically removed during virion maturation. The processing of the C-terminus turns the precursor into a mature viral structural protein and abrogates its ability to promote hexon import and act as a potential chaperone protein.

Its subcellular location is the host nucleus. It is found in the host cytoplasm. The protein resides in the virion. Its function is as follows. During virus assembly, promotes hexon trimers nuclear import through nuclear pore complexes via an importin alpha/beta-dependent mechanism. By analogy to herpesviruses capsid assembly, might act as a chaperone to promote the formation of the icosahedral capsid. In terms of biological role, structural component of the virion that provides increased stability to the particle shell through its interaction with the core-capsid bridging protein and the hexon-linking protein VIII. Fibers shedding during virus entry into host cell allows the endosome lysis protein to be exposed as a membrane-lytic peptide. Exhibits pH-independent membrane fragmentation activity and probably mediates viral rapid escape from host endosome via organellar membrane lysis. It is not clear if it then remains partially associated with the capsid and involved in the intracellular microtubule-dependent transport of capsid to the nucleus, or if it is lost during endosomal penetration. Functionally, cofactor that activates the viral protease. Binds to viral protease in a 1:1 ratio. The polypeptide is Pre-protein VI (Homo sapiens (Human)).